We begin with the raw amino-acid sequence, 226 residues long: Cytidylate kinase (226 aa).

11–19 is a binding site for ATP; sequence GPASAGKST.

This sequence belongs to the cytidylate kinase family. Type 1 subfamily.

The protein resides in the cytoplasm. The enzyme catalyses CMP + ATP = CDP + ADP. It catalyses the reaction dCMP + ATP = dCDP + ADP. This is Cytidylate kinase from Limosilactobacillus fermentum (strain NBRC 3956 / LMG 18251) (Lactobacillus fermentum).